Consider the following 143-residue polypeptide: Putative pre-16S rRNA nuclease (143 aa).

It belongs to the YqgF nuclease family.

It localises to the cytoplasm. Its function is as follows. Could be a nuclease involved in processing of the 5'-end of pre-16S rRNA. The sequence is that of Putative pre-16S rRNA nuclease from Crocosphaera subtropica (strain ATCC 51142 / BH68) (Cyanothece sp. (strain ATCC 51142)).